Reading from the N-terminus, the 67-residue chain is uncharacterized protein (67 aa).

2 helical membrane passes run 8-28 (MWFALGSMGLMFLAVASIYLS) and 41-61 (ISSFAYMCMLISGIIVFVVVF).

The protein resides in the cell membrane. This is an uncharacterized protein from Bacillus subtilis (strain 168).